The chain runs to 340 residues: Spike protein P5 (340 aa).

The domain-1 stretch occupies residues alanine 2–proline 122. The region spanning serine 123 to threonine 141 is the Collagen-like domain. Positions valine 142 to asparagine 340 are domain-2.

As to quaternary structure, homotrimer.

Its subcellular location is the virion. In association with P31 and P2, forms the spike complexes located at the 5-fold vertices of the capsid. Essential for viral infectivity. The chain is Spike protein P5 (V) from Enterobacteria phage PRD1 (Bacteriophage PRD1).